The sequence spans 255 residues: Zinc-finger homeodomain protein 6 (255 aa).

Residues 1–35 (MEFRGHDEPVDEMGVAYGRTPPSSSSSPAASASAG) are disordered. Low complexity predominate over residues 21-35 (PPSSSSSPAASASAG). The ZF-HD dimerization-type; degenerate zinc-finger motif lies at 45–93 (YHECLRNHAAAMGGHVVDGCREFMPMPGDAADALKCAACGCHRSFHRKD). Pro residues predominate over residues 106–126 (PSPPTPRVPLLMPPPQPQPHP). 2 disordered regions span residues 106–181 (PSPP…KFTP) and 226–255 (NNKSSIGSSSGGGSRRQPQEQQSQQQQQQQ). The segment covering 139–153 (YHHTPSGSGGTTTES) has biased composition (low complexity). Positions 172–235 (RKRFRTKFTP…NNKSSIGSSS (64 aa)) form a DNA-binding region, homeobox. Positions 240-255 (RRQPQEQQSQQQQQQQ) are enriched in low complexity.

In terms of assembly, homo- and heterodimer with other ZFHD proteins.

It is found in the nucleus. Its function is as follows. Putative transcription factor. The polypeptide is Zinc-finger homeodomain protein 6 (ZHD6) (Oryza sativa subsp. japonica (Rice)).